Here is a 453-residue protein sequence, read N- to C-terminus: Indoleamine 2,3-dioxygenase (453 aa).

Histidine 331 contacts heme.

This sequence belongs to the indoleamine 2,3-dioxygenase family. The cofactor is heme.

The catalysed reaction is D-tryptophan + O2 = N-formyl-D-kynurenine. It carries out the reaction L-tryptophan + O2 = N-formyl-L-kynurenine. Its pathway is cofactor biosynthesis; NAD(+) biosynthesis. Catalyzes the first step in tryptophan catabolism in order to supply de novo nicotinamide adenine dinucleotide (NAD(+)) via the kynurenine pathway. Plays a role in the cellular response to telomere uncapping. This chain is Indoleamine 2,3-dioxygenase (BNA2), found in Saccharomyces cerevisiae (strain ATCC 204508 / S288c) (Baker's yeast).